Consider the following 358-residue polypeptide: Oxidase FUB9 (358 aa).

In terms of domain architecture, FMN hydroxy acid dehydrogenase spans 6-350 (SSKPQIFSIQ…SPAHLSILNA (345 aa)). Tyr32 contacts a 2-oxocarboxylate. Residues Ser114, Gln138, and Thr166 each coordinate FMN. Position 175 (Arg175) interacts with a 2-oxocarboxylate. Lys221 provides a ligand contact to FMN. His245 (proton acceptor) is an active-site residue. A 2-oxocarboxylate is bound at residue Arg248. Residues 276 to 280 (DGGFR) and 299 to 300 (GR) contribute to the FMN site.

Belongs to the FMN-dependent alpha-hydroxy acid dehydrogenase family. Requires FMN as cofactor.

The protein operates within mycotoxin biosynthesis. Its function is as follows. Oxidase; part of the gene cluster that mediates the biosynthesis of fusaric acid, a mycotoxin with low to moderate toxicity to animals and humans, but with high phytotoxic properties. L-aspartate is suggested as fusaric acid amino acid precursor that is activated and further processed to O-acetyl-L-homoserine by cluster enzymes aspartate kinase FUB3 and homoserine O-acetyltransferase FUB5, as well as enzymes of the primary metabolism. The polyketide synthase (PKS) FUB1 generates the triketide trans-2-hexenal which is presumptively released by the hydrolase FUB4 and linked to the NRPS-bound amino acid precursor by NAD(P)-dependent dehydrogenase FUB6. FUB1, FUB4, and the non-canonical NRPS Fub8 may form an enzyme complex. Further processing of the NRPS-bound intermediate might be carried out by FUB6 and the sulfhydrylase FUB7, enabling a spontaneous electrocyclization to close the carbon backbone of fusaric acid. Dihydrofusaric acid is likely to be released via reduction by the thioester reductase (TR) domain of FUB8 whereupon the final oxidation to fusaric acid may (also) be performed by the FMN-dependent dehydrogenase FUB9. This chain is Oxidase FUB9, found in Gibberella fujikuroi (strain CBS 195.34 / IMI 58289 / NRRL A-6831) (Bakanae and foot rot disease fungus).